The sequence spans 667 residues: MSSPSENHLLGPKTSFIDNRTSTSRPLHEIPSYQSLARRSSTWKRANIPQQKPSLVRRINYYIPVLHWLPNYSLRNIIWDVLAGCSTACLSVPIALSFAQTFLGVPPIYILTGTAIGPILYCLFTACPLISIGPEAGMCLLIAENIHQRVLSKADVPQETAILVTGLIAFIAGIINLAAGLFRLGFLDALVSPVLLRGCILSISMIIMINQGSVFFGFSGVKYKGSDFPIDKLMFLIRNMSKANIYTTILSCITISLLIGCRNLKSKLSAKYPRIVSIPDAVIILLLGSFLSKKFDWHSNYGIAILGEIKTTILLPKLPLPEKNKLHFITQSLQTGVMCSFLAFIDTVIAVKAISLQTNNLIRSNRELISLGAANIGSSLFCGLPICGGYLRTKCNIMSGARTQVATIACSVLILLATFFIMPVFSTVPTCMLASMVVSLGVSLFADAAVEIFKLARIRVWWELGIIFSIATCTMMFGLETGIIFGLSITVMQIIRHSTRSRIMFRSPTSNGTAEFILEDAASTLSHRTNPSSTAVESAPRILVVRIPEPLFFANVSQLEDRLNRLEKYGHPRMHPGETPYRRIEDIEVVVFDMVGVSSIDSSALFAFQRILKEYVEHQVEVHLVSLDPQVLHIFEKHGLLDLIGGYDHVQDSIKKVDALCDIELGV.

The tract at residues 1 to 27 (MSSPSENHLLGPKTSFIDNRTSTSRPL) is disordered. Over residues 16–25 (FIDNRTSTSR) the composition is skewed to polar residues. The next 12 helical transmembrane spans lie at 77–97 (IIWD…IALS), 102–122 (FLGV…ILYC), 162–182 (ILVT…AGLF), 198–218 (GCIL…FFGF), 240–260 (MSKA…LLIG), 275–295 (IVSI…SKKF), 301–321 (YGIA…LPLP), 336–356 (GVMC…AISL), 368–388 (LISL…PICG), 405–425 (VATI…MPVF), 433–453 (LASM…VEIF), and 465–485 (GIIF…GIIF). Residues 532–657 (SSTAVESAPR…DHVQDSIKKV (126 aa)) form the STAS domain.

It belongs to the SLC26A/SulP transporter (TC 2.A.53) family.

Its subcellular location is the endoplasmic reticulum membrane. In terms of biological role, possible sulfate transporter. The sequence is that of Probable sulfate permease C320.05 from Schizosaccharomyces pombe (strain 972 / ATCC 24843) (Fission yeast).